The sequence spans 224 residues: Twisted gastrulation protein homolog 1 (224 aa).

Positions 1–26 are cleaved as a signal peptide; sequence MRSPCAALSASLLLLLLLLWARSSVG. Residues Asn-53, Asn-82, and Asn-148 are each glycosylated (N-linked (GlcNAc...) asparagine).

The protein belongs to the twisted gastrulation protein family. As to quaternary structure, interacts with CHRD and BMP4. This interaction enhances CHRD/BMP4 complex formation. Interacts with BMP7.

The protein resides in the secreted. In terms of biological role, may be involved in dorsoventral axis formation. Seems to antagonize BMP signaling by forming ternary complexes with CHRD and BMPs, thereby preventing BMPs from binding to their receptors. In addition to the anti-BMP function, also has pro-BMP activity, partly mediated by cleavage and degradation of CHRD, which releases BMPs from ternary complexes. May be an important modulator of BMP-regulated cartilage development and chondrocyte differentiation. May play a role in thymocyte development. The protein is Twisted gastrulation protein homolog 1 (TWSG1) of Gallus gallus (Chicken).